The following is a 392-amino-acid chain: Alanine--glyoxylate aminotransferase (392 aa).

Lysine 209 carries the post-translational modification N6-(pyridoxal phosphate)lysine. An N6-acetyllysine; alternate modification is found at lysine 225. At lysine 225 the chain carries N6-succinyllysine; alternate. N6-acetyllysine is present on residues lysine 234 and lysine 312. Position 360 (arginine 360) interacts with substrate. A Microbody targeting signal motif is present at residues 390–392 (KKL).

The protein belongs to the class-V pyridoxal-phosphate-dependent aminotransferase family. As to quaternary structure, homodimer. Pyridoxal 5'-phosphate is required as a cofactor.

It is found in the peroxisome. The enzyme catalyses L-serine + pyruvate = 3-hydroxypyruvate + L-alanine. It carries out the reaction glyoxylate + L-alanine = glycine + pyruvate. Its function is as follows. Peroxisomal aminotransferase that catalyzes the transamination of glyoxylate to glycine and contributes to the glyoxylate detoxification. Also catalyzes the transamination between L-serine and pyruvate and contributes to gluconeogenesis from the L-serine metabolism. The sequence is that of Alanine--glyoxylate aminotransferase from Pongo abelii (Sumatran orangutan).